Here is a 161-residue protein sequence, read N- to C-terminus: Vitamin K-dependent protein C (161 aa).

A Peptidase S1 domain is found at 1-161 (EKWELDLDIE…GCGLLHNYGV (161 aa)). N17 is a glycosylation site (N-linked (GlcNAc...) asparagine). The Charge relay system role is filled by D26. The N-linked (GlcNAc...) asparagine glycan is linked to N82. Disulfide bonds link C100–C114 and C125–C153. The active-site Charge relay system is S129.

It belongs to the peptidase S1 family. In terms of tissue distribution, plasma; synthesized in the liver.

Its subcellular location is the secreted. It is found in the golgi apparatus. It localises to the endoplasmic reticulum. It catalyses the reaction Degradation of blood coagulation factors Va and VIIIa.. In terms of biological role, protein C is a vitamin K-dependent serine protease that regulates blood coagulation by inactivating factors Va and VIIIa in the presence of calcium ions and phospholipids. Exerts a protective effect on the endothelial cell barrier function. In Macaca mulatta (Rhesus macaque), this protein is Vitamin K-dependent protein C (PROC).